We begin with the raw amino-acid sequence, 277 residues long: Ubiquinone biosynthesis protein COQ4, mitochondrial (277 aa).

Residues 1-14 (MLTKRALRTTDPYR) constitute a mitochondrion transit peptide. Zn(2+)-binding residues include H157, D158, H161, and E173.

It belongs to the COQ4 family. In terms of assembly, component of a multi-subunit COQ enzyme complex, composed of at least COQ3, COQ4, COQ5, COQ6, COQ7 and COQ9. The cofactor is Zn(2+).

It is found in the mitochondrion inner membrane. It carries out the reaction a 4-hydroxy-3-methoxy-5-(all-trans-polyprenyl)benzoate + H(+) = a 2-methoxy-6-(all-trans-polyprenyl)phenol + CO2. Its pathway is cofactor biosynthesis; ubiquinone biosynthesis. In terms of biological role, lyase that catalyzes the C1-decarboxylation of 4-hydroxy-3-methoxy-5-(all-trans-polyprenyl)benzoic acid into 2-methoxy-6-(all-trans-polyprenyl)phenol during ubiquinone biosynthesis. The polypeptide is Ubiquinone biosynthesis protein COQ4, mitochondrial (Ajellomyces capsulatus (strain NAm1 / WU24) (Darling's disease fungus)).